The sequence spans 333 residues: 6-phosphogluconolactonase (333 aa).

Belongs to the cycloisomerase 2 family.

It catalyses the reaction 6-phospho-D-glucono-1,5-lactone + H2O = 6-phospho-D-gluconate + H(+). Its pathway is carbohydrate degradation; pentose phosphate pathway; D-ribulose 5-phosphate from D-glucose 6-phosphate (oxidative stage): step 2/3. In terms of biological role, catalyzes the hydrolysis of 6-phosphogluconolactone to 6-phosphogluconate. This is 6-phosphogluconolactonase from Buchnera aphidicola subsp. Schizaphis graminum (strain Sg).